The following is a 320-amino-acid chain: ATP-dependent 6-phosphofructokinase (320 aa).

Glycine 12 contributes to the ATP binding site. Residues 22–26 and 55–60 contribute to the ADP site; these read RGVVR and RYSVSD. ATP is bound by residues 73–74 and 103–106; these read RF and GDGS. Mg(2+) is bound at residue aspartate 104. Substrate is bound at residue 126 to 128; the sequence is TID. Aspartate 128 serves as the catalytic Proton acceptor. Arginine 155 contributes to the ADP binding site. Substrate-binding positions include arginine 163 and 170–172; that span reads MGR. ADP is bound by residues 186 to 188, lysine 212, and 214 to 216; these read GCE and KKH. Residues glutamate 223, arginine 244, and 250–253 contribute to the substrate site; that span reads HIQR.

It belongs to the phosphofructokinase type A (PFKA) family. ATP-dependent PFK group I subfamily. Prokaryotic clade 'B1' sub-subfamily. As to quaternary structure, homotetramer. Mg(2+) is required as a cofactor.

The protein localises to the cytoplasm. The catalysed reaction is beta-D-fructose 6-phosphate + ATP = beta-D-fructose 1,6-bisphosphate + ADP + H(+). The protein operates within carbohydrate degradation; glycolysis; D-glyceraldehyde 3-phosphate and glycerone phosphate from D-glucose: step 3/4. With respect to regulation, allosterically activated by ADP and other diphosphonucleosides, and allosterically inhibited by phosphoenolpyruvate. Catalyzes the phosphorylation of D-fructose 6-phosphate to fructose 1,6-bisphosphate by ATP, the first committing step of glycolysis. This Enterobacter cloacae protein is ATP-dependent 6-phosphofructokinase.